Here is a 156-residue protein sequence, read N- to C-terminus: MPRRARKFKRAVAPDSRYNSLMLSNFINKLMMHGQKATAQRIVYDAIDIMGKQENKEGLAVFEQGLKNATPFIEVKPRRVGGATYQVPIEVRPDRAQTMAMRWIIKAARKRTGKSMAERLAAEMLEASREQGAAVKKREETHKMAEANRAFVHYRW.

The protein belongs to the universal ribosomal protein uS7 family. In terms of assembly, part of the 30S ribosomal subunit. Contacts proteins S9 and S11.

Functionally, one of the primary rRNA binding proteins, it binds directly to 16S rRNA where it nucleates assembly of the head domain of the 30S subunit. Is located at the subunit interface close to the decoding center, probably blocks exit of the E-site tRNA. This Dehalococcoides mccartyi (strain ATCC BAA-2266 / KCTC 15142 / 195) (Dehalococcoides ethenogenes (strain 195)) protein is Small ribosomal subunit protein uS7.